Reading from the N-terminus, the 433-residue chain is Divergent protein kinase domain 2B (433 aa).

Positions 1-31 are cleaved as a signal peptide; sequence MEPQLGPEAAALRPGWLALLLWVSALSCSFS. N-linked (GlcNAc...) asparagine glycosylation is present at Asn-100.

This sequence belongs to the DIPK family.

The protein resides in the secreted. This is Divergent protein kinase domain 2B from Homo sapiens (Human).